The chain runs to 243 residues: Probable transcriptional regulator ycf27 (243 aa).

The Response regulatory domain occupies 7–120; the sequence is KILVVDDEAS…ELEARIRSVL (114 aa). D56 is subject to 4-aspartylphosphate. The segment at residues 76–94 is a DNA-binding region (H-T-H motif); that stretch reads DVPIIMLTALGEVCDRITG. The segment at residues 135–236 is a DNA-binding region (ompR/PhoB-type); that stretch reads SGIISIGFLK…ARGTGYLFQR (102 aa).

It localises to the plastid. Its subcellular location is the chloroplast. In terms of biological role, probable promoter-specific protein mediating the interaction between DNA and RNA polymerase. The polypeptide is Probable transcriptional regulator ycf27 (ycf27) (Pyropia yezoensis (Susabi-nori)).